The primary structure comprises 333 residues: Flap endonuclease 1 (333 aa).

Positions 1 to 99 (MGVALREVLT…ETIESRREVR (99 aa)) are N-domain. Residues Asp28, Asp81, Glu153, Glu155, Asp174, Asp176, and Asp235 each contribute to the Mg(2+) site. An I-domain region spans residues 117-256 (EAYKQARASS…TALKIVKKDG (140 aa)). Residues 325–333 (GQKTLDRWF) are interaction with PCNA.

Belongs to the XPG/RAD2 endonuclease family. FEN1 subfamily. As to quaternary structure, interacts with PCNA. PCNA stimulates the nuclease activity without altering cleavage specificity. The cofactor is Mg(2+).

Structure-specific nuclease with 5'-flap endonuclease and 5'-3' exonuclease activities involved in DNA replication and repair. During DNA replication, cleaves the 5'-overhanging flap structure that is generated by displacement synthesis when DNA polymerase encounters the 5'-end of a downstream Okazaki fragment. Binds the unpaired 3'-DNA end and kinks the DNA to facilitate 5' cleavage specificity. Cleaves one nucleotide into the double-stranded DNA from the junction in flap DNA, leaving a nick for ligation. Also involved in the base excision repair (BER) pathway. Acts as a genome stabilization factor that prevents flaps from equilibrating into structures that lead to duplications and deletions. Also possesses 5'-3' exonuclease activity on nicked or gapped double-stranded DNA. This is Flap endonuclease 1 from Methanosphaerula palustris (strain ATCC BAA-1556 / DSM 19958 / E1-9c).